Reading from the N-terminus, the 220-residue chain is Glutamine amidotransferase-like class 1 domain-containing protein 1 (220 aa).

Positions 1–35 (MASERLPSRPACLLVASGAAEGVSAQSFLHCFTLA) are cleaved as a signal peptide. 2 N-linked (GlcNAc...) asparagine glycosylation sites follow: Asn-57 and Asn-201.

This sequence belongs to the peptidase C56 family. In terms of assembly, homotetramer. Component of the FERRY complex composed of five subunits, TBCK, PPP1R21, FERRY3, CRYZL1 and GATD1 with a ratio of 1:2:1:2:4, respectively.

The protein resides in the secreted. Its subcellular location is the early endosome. Functionally, component of the FERRY complex (Five-subunit Endosomal Rab5 and RNA/ribosome intermediary). The FERRY complex directly interacts with mRNAs and RAB5A, and functions as a RAB5A effector involved in the localization and the distribution of specific mRNAs most likely by mediating their endosomal transport. The complex recruits mRNAs and ribosomes to early endosomes through direct mRNA-interaction. The chain is Glutamine amidotransferase-like class 1 domain-containing protein 1 from Bos taurus (Bovine).